The primary structure comprises 100 residues: Small ribosomal subunit protein bS21 (100 aa).

Positions 37–52 (EKPSEKKAREKAEAVR) are enriched in basic and acidic residues. The interval 37–100 (EKPSEKKARE…GAGAGPRGPR (64 aa)) is disordered. Over residues 53 to 62 (RARKLARKKL) the composition is skewed to basic residues. Over residues 84–100 (GAAGAGAGAGAGPRGPR) the composition is skewed to gly residues.

The protein belongs to the bacterial ribosomal protein bS21 family.

This is Small ribosomal subunit protein bS21 from Rhodopseudomonas palustris (strain BisB5).